The following is a 289-amino-acid chain: Heme oxygenase 1 (289 aa).

A compositionally biased stretch (polar residues) spans Met1–Gln12. The interval Met1–Glu24 is disordered. Topologically, residues Met1–Ala266 are cytoplasmic. Heme b-binding residues include Lys19, His26, Tyr135, and Arg184. A disordered region spans residues Arg239 to Ser261. Position 243 is a phosphoserine (Ser243). Residues Pro267–Met289 form a helical; Anchor for type IV membrane protein membrane-spanning segment.

This sequence belongs to the heme oxygenase family. Homodimer and higher order homooligomer. Oligomerization is crucial for its stability and function in the endoplasmic reticulum. Interacts with FLVCR2; this interaction is potentiated in the presence of heme. In terms of processing, a soluble form arises by proteolytic removal of the membrane anchor.

It localises to the endoplasmic reticulum membrane. The enzyme catalyses heme b + 3 reduced [NADPH--hemoprotein reductase] + 3 O2 = biliverdin IXalpha + CO + Fe(2+) + 3 oxidized [NADPH--hemoprotein reductase] + 3 H2O + H(+). Inhibited by metalloporphyrins such as Sn-, Co-, Mn- and Zn-protoporphyrins. In terms of biological role, catalyzes the oxidative cleavage of heme at the alpha-methene bridge carbon, released as carbon monoxide (CO), to generate biliverdin IXalpha, while releasing the central heme iron chelate as ferrous iron. Affords protection against programmed cell death and this cytoprotective effect relies on its ability to catabolize free heme and prevent it from sensitizing cells to undergo apoptosis. Catalyzes the oxidative cleavage of heme at the alpha-methene bridge carbon, released as carbon monoxide (CO), to generate biliverdin IXalpha, while releasing the central heme iron chelate as ferrous iron. This is Heme oxygenase 1 (HMOX1) from Bos taurus (Bovine).